We begin with the raw amino-acid sequence, 117 residues long: Con-Ins T3 (117 aa).

An N-terminal signal peptide occupies residues 1–24; the sequence is MTTSFYFLLMALGLLLYVCQSSFG. A propeptide spanning residues 25–29 is cleaved from the precursor; sequence NQHTR. Proline 34 is modified (4-hydroxyproline; partial). Cystine bridges form between cysteine 38-cysteine 101, cysteine 50-cysteine 114, and cysteine 100-cysteine 105. The propeptide at 53 to 94 is c peptide; the sequence is KRNDAGKKRGQASPLWQRGGSLSMLKARAKRNEAFHLQRAHR. A 4-carboxyglutamate modification is found at glutamate 98. Position 109 is a 4-carboxyglutamate; partial (glutamate 109). Cysteine amide is present on cysteine 114. Positions 116–117 are excised as a propeptide; it reads NS.

This sequence belongs to the insulin family. In terms of assembly, heterodimer of A and B chains; disulfide-linked. Expressed by the venom gland.

It is found in the secreted. Its function is as follows. This venom insulin facilitates prey capture by rapidly inducing hypoglycemic shock. It is one of the smallest known insulin found in nature and lacks the C-terminal segment of the B chain that, in human insulin, mediates engagement of the insulin receptor (INSR) and assembly of the hormone's hexameric storage form. Despite lacking this segment, it both binds and activates human insulin receptor (long isoform (HIR-B) OF INSR) with only a 10-fold lower potency. In vivo, intraperitoneal injection of this peptide into zebrafish lowers blood glucose with the same potency than human insulin. In addition, when applied to water, this peptide reduces overall locomotor activity of zebrafish larvae, observed as a significant decrease in the percentage of time spent swimming and movement frequency. The sequence is that of Con-Ins T3 from Conus tulipa (Fish-hunting cone snail).